Reading from the N-terminus, the 110-residue chain is Protein YcgL (110 aa).

In terms of domain architecture, YcgL spans 14–98 (MFCVIYRSSK…PPEDLLKQHL (85 aa)). Positions 87 to 110 (PPPPEDLLKQHLSSVGQNTSPADR) are disordered. Polar residues predominate over residues 97–110 (HLSSVGQNTSPADR).

This Salmonella choleraesuis (strain SC-B67) protein is Protein YcgL.